The chain runs to 542 residues: Chaperonin GroEL 2 (542 aa).

Residues 30–33 (TLGP), Lys51, 87–91 (DGTTT), Gly415, and Asp496 contribute to the ATP site.

Belongs to the chaperonin (HSP60) family. In terms of assembly, forms a cylinder of 14 subunits composed of two heptameric rings stacked back-to-back. Interacts with the co-chaperonin GroES.

Its subcellular location is the cytoplasm. The catalysed reaction is ATP + H2O + a folded polypeptide = ADP + phosphate + an unfolded polypeptide.. Its function is as follows. Together with its co-chaperonin GroES, plays an essential role in assisting protein folding. The GroEL-GroES system forms a nano-cage that allows encapsulation of the non-native substrate proteins and provides a physical environment optimized to promote and accelerate protein folding. This is Chaperonin GroEL 2 from Sinorhizobium fredii (strain NBRC 101917 / NGR234).